The chain runs to 1218 residues: Cytosolic carboxypeptidase 1 (1218 aa).

2 disordered regions span residues 476 to 512 (VVMK…RVAP) and 590 to 617 (TEDD…PTLH). Positions 477–499 (VMKERASPKGEEAKEDPKGHDRT) are enriched in basic and acidic residues. One can recognise a Peptidase M14 domain in the interval 840–1130 (YPYTYSTLQM…KFCVGLLRLK (291 aa)). Zn(2+)-binding residues include H912, E915, and H1009. Catalysis depends on E1094, which acts as the Proton donor/acceptor. Position 1160 is a phosphoserine (S1160). A disordered region spans residues 1193-1218 (ENTGDYEPSAQEEALSDSEVSRTHLI).

This sequence belongs to the peptidase M14 family. In terms of assembly, interacts with MYLK. It depends on Zn(2+) as a cofactor. As to expression, widely expressed. Highly expressed in the cerebellum and cortex of adult mouse brain. Expressed at similar levels in both the cerebellum and the cortex throughout all developmental stages. Also expressed in sciatic nerve transection, spinal motor neurons undergoing axon regeneration, testis, heart, eye, lung, pancreas, intestine, stomach, pituitary, spleen, adrenal, kidney and in developing brain. Expression in cranial motor nuclei is the same as that observed in uninjured primary motor neurons. Expression is prevalent in sensory neurons and hippocampal CA3 neurons in addition to regenerating motor neurons.

The protein resides in the cytoplasm. The protein localises to the cytosol. It localises to the nucleus. It is found in the mitochondrion. The enzyme catalyses (L-glutamyl)(n+1)-gamma-L-glutamyl-L-glutamyl-[protein] + H2O = (L-glutamyl)(n)-gamma-L-glutamyl-L-glutamyl-[protein] + L-glutamate. The catalysed reaction is C-terminal L-alpha-aminoacyl-L-glutamyl-L-glutamyl-[tubulin] + H2O = C-terminal L-alpha-aminoacyl-L-glutamyl-[tubulin] + L-glutamate. Its function is as follows. Metallocarboxypeptidase that mediates protein deglutamylation of tubulin and non-tubulin target proteins. Catalyzes the removal of polyglutamate side chains present on the gamma-carboxyl group of glutamate residues within the C-terminal tail of alpha- and beta-tubulin. Specifically cleaves tubulin long-side-chains, while it is not able to remove the branching point glutamate. Also catalyzes the removal of polyglutamate residues from the carboxy-terminus of alpha-tubulin as well as non-tubulin proteins such as MYLK. Involved in KLF4 deglutamylation which promotes KLF4 proteasome-mediated degradation, thereby negatively regulating cell pluripotency maintenance and embryogenesis. The polypeptide is Cytosolic carboxypeptidase 1 (Mus musculus (Mouse)).